Consider the following 487-residue polypeptide: 2-aminomuconic semialdehyde dehydrogenase (487 aa).

231 to 236 (GSQPTA) is an NAD(+) binding site. Catalysis depends on glutamate 253, which acts as the Proton acceptor. Cysteine 287 serves as the catalytic Nucleophile.

Belongs to the aldehyde dehydrogenase family.

The protein resides in the cytoplasm. It carries out the reaction 2-aminomuconate 6-semialdehyde + NAD(+) + H2O = (2Z,4E)-2-aminomuconate + NADH + 2 H(+). It functions in the pathway amino-acid degradation; L-kynurenine degradation. In terms of biological role, catalyzes the NAD-dependent oxidation of 2-aminomuconic semialdehyde of the kynurenine metabolic pathway in L-tryptophan degradation. The polypeptide is 2-aminomuconic semialdehyde dehydrogenase (ALDH8A1) (Bos taurus (Bovine)).